Here is a 544-residue protein sequence, read N- to C-terminus: Chaperonin GroEL (544 aa).

ATP is bound by residues 30–33, Lys-51, 87–91, Gly-415, and Asp-495; these read TLGP and DGTTT.

This sequence belongs to the chaperonin (HSP60) family. In terms of assembly, forms a cylinder of 14 subunits composed of two heptameric rings stacked back-to-back. Interacts with the co-chaperonin GroES.

The protein resides in the cytoplasm. It carries out the reaction ATP + H2O + a folded polypeptide = ADP + phosphate + an unfolded polypeptide.. In terms of biological role, together with its co-chaperonin GroES, plays an essential role in assisting protein folding. The GroEL-GroES system forms a nano-cage that allows encapsulation of the non-native substrate proteins and provides a physical environment optimized to promote and accelerate protein folding. This chain is Chaperonin GroEL, found in Neisseria flavescens.